The following is a 103-amino-acid chain: uncharacterized protein (103 aa).

This is an uncharacterized protein from Sinorhizobium fredii (strain NBRC 101917 / NGR234).